The chain runs to 472 residues: NALCN channel auxiliary factor 2 (472 aa).

Residues 47 to 67 form a helical membrane-spanning segment; it reads LASLLFFTVLLADHLWLCAGA. A disordered region spans residues 77–114; it reads AMRPPWGAGRERQPVPPRAVLPLPPPPPGEPSAPPGTC. The span at 90–110 shows a compositional bias: pro residues; that stretch reads PVPPRAVLPLPPPPPGEPSAP. N-linked (GlcNAc...) asparagine glycosylation is found at Asn-120 and Asn-193. A helical transmembrane segment spans residues 433-453; it reads LCVLVLMLLHTVVSFSSNQGG.

The protein belongs to the NALF family.

The protein localises to the membrane. Its function is as follows. Probable component of the NALCN channel complex, a channel that regulates the resting membrane potential and controls neuronal excitability. The polypeptide is NALCN channel auxiliary factor 2 (Homo sapiens (Human)).